The following is a 217-amino-acid chain: Superoxide dismutase [Cu-Zn], chloroplastic (217 aa).

A chloroplast-targeting transit peptide spans 1 to 63 (MAAHSIFTTT…TTPKPLTVFA (63 aa)). His-109, His-111, and His-126 together coordinate Cu cation. A disulfide bond links Cys-120 and Cys-209. Residues His-126, His-134, His-143, and Asp-146 each coordinate Zn(2+). Residue His-183 coordinates Cu cation.

The protein belongs to the Cu-Zn superoxide dismutase family. Homotetramer. The cofactor is Cu cation. Requires Zn(2+) as cofactor.

Its subcellular location is the plastid. The protein localises to the chloroplast. It carries out the reaction 2 superoxide + 2 H(+) = H2O2 + O2. Destroys radicals which are normally produced within the cells and which are toxic to biological systems. This chain is Superoxide dismutase [Cu-Zn], chloroplastic (SODCP.2), found in Solanum lycopersicum (Tomato).